The sequence spans 80 residues: UPF0248 protein YG5714_2801 (80 aa).

Belongs to the UPF0248 family.

This is UPF0248 protein YG5714_2801 from Saccharolobus islandicus (strain Y.G.57.14 / Yellowstone #1) (Sulfolobus islandicus).